The primary structure comprises 117 residues: Aspartate 1-decarboxylase (117 aa).

The active-site Schiff-base intermediate with substrate; via pyruvic acid is Ser-25. Pyruvic acid (Ser) is present on Ser-25. A substrate-binding site is contributed by Thr-57. The Proton donor role is filled by Tyr-58. 73–75 (GAA) contributes to the substrate binding site.

It belongs to the PanD family. As to quaternary structure, heterooctamer of four alpha and four beta subunits. Pyruvate serves as cofactor. In terms of processing, is synthesized initially as an inactive proenzyme, which is activated by self-cleavage at a specific serine bond to produce a beta-subunit with a hydroxyl group at its C-terminus and an alpha-subunit with a pyruvoyl group at its N-terminus.

It localises to the cytoplasm. The catalysed reaction is L-aspartate + H(+) = beta-alanine + CO2. The protein operates within cofactor biosynthesis; (R)-pantothenate biosynthesis; beta-alanine from L-aspartate: step 1/1. Its function is as follows. Catalyzes the pyruvoyl-dependent decarboxylation of aspartate to produce beta-alanine. This chain is Aspartate 1-decarboxylase, found in Bacteroides thetaiotaomicron (strain ATCC 29148 / DSM 2079 / JCM 5827 / CCUG 10774 / NCTC 10582 / VPI-5482 / E50).